Reading from the N-terminus, the 122-residue chain is Small ribosomal subunit protein uS13 (122 aa).

The disordered stretch occupies residues 99–122 (RGQRTHTNARTRKGPAKAIAGKKK).

Belongs to the universal ribosomal protein uS13 family. As to quaternary structure, part of the 30S ribosomal subunit. Forms a loose heterodimer with protein S19. Forms two bridges to the 50S subunit in the 70S ribosome.

Located at the top of the head of the 30S subunit, it contacts several helices of the 16S rRNA. In the 70S ribosome it contacts the 23S rRNA (bridge B1a) and protein L5 of the 50S subunit (bridge B1b), connecting the 2 subunits; these bridges are implicated in subunit movement. Contacts the tRNAs in the A and P-sites. The protein is Small ribosomal subunit protein uS13 of Bradyrhizobium sp. (strain BTAi1 / ATCC BAA-1182).